The chain runs to 373 residues: Dual-specificity RNA methyltransferase RlmN (373 aa).

Residue Glu-94 is the Proton acceptor of the active site. One can recognise a Radical SAM core domain in the interval 100 to 339 (EDDRATLCVS…VIVRKTRGDD (240 aa)). Cys-107 and Cys-344 are disulfide-bonded. Residues Cys-114, Cys-118, and Cys-121 each coordinate [4Fe-4S] cluster. S-adenosyl-L-methionine-binding positions include 168 to 169 (GE), Ser-200, 222 to 224 (SIH), and Asn-301. Cys-344 acts as the S-methylcysteine intermediate in catalysis.

It belongs to the radical SAM superfamily. RlmN family. Requires [4Fe-4S] cluster as cofactor.

The protein resides in the cytoplasm. It carries out the reaction adenosine(2503) in 23S rRNA + 2 reduced [2Fe-2S]-[ferredoxin] + 2 S-adenosyl-L-methionine = 2-methyladenosine(2503) in 23S rRNA + 5'-deoxyadenosine + L-methionine + 2 oxidized [2Fe-2S]-[ferredoxin] + S-adenosyl-L-homocysteine. The catalysed reaction is adenosine(37) in tRNA + 2 reduced [2Fe-2S]-[ferredoxin] + 2 S-adenosyl-L-methionine = 2-methyladenosine(37) in tRNA + 5'-deoxyadenosine + L-methionine + 2 oxidized [2Fe-2S]-[ferredoxin] + S-adenosyl-L-homocysteine. Functionally, specifically methylates position 2 of adenine 2503 in 23S rRNA and position 2 of adenine 37 in tRNAs. m2A2503 modification seems to play a crucial role in the proofreading step occurring at the peptidyl transferase center and thus would serve to optimize ribosomal fidelity. This Shewanella sp. (strain MR-7) protein is Dual-specificity RNA methyltransferase RlmN.